The primary structure comprises 130 residues: Small ribosomal subunit protein uS8 (130 aa).

Belongs to the universal ribosomal protein uS8 family. In terms of assembly, part of the 30S ribosomal subunit.

In terms of biological role, one of the primary rRNA binding proteins, it binds directly to 16S rRNA central domain where it helps coordinate assembly of the platform of the 30S subunit. The chain is Small ribosomal subunit protein uS8 from Methanosarcina mazei (strain ATCC BAA-159 / DSM 3647 / Goe1 / Go1 / JCM 11833 / OCM 88) (Methanosarcina frisia).